The chain runs to 92 residues: Putative defensin-like protein 225 (92 aa).

Residues 1 to 26 (MKYGVLFMVSCGVMFLILSHVEEVEA) form the signal peptide. Disulfide bonds link Cys-32–Cys-92, Cys-42–Cys-70, and Cys-68–Cys-88.

Belongs to the DEFL family.

Its subcellular location is the secreted. The chain is Putative defensin-like protein 225 (SCRL1) from Arabidopsis thaliana (Mouse-ear cress).